A 424-amino-acid chain; its full sequence is UDP-galactose transporter homolog 1 (424 aa).

The next 6 helical transmembrane spans lie at 57–77 (LWQL…WGVL), 107–127 (IVLN…YLYF), 144–164 (IIFP…FGYA), 173–193 (TFIL…LTIF), 197–217 (YPLY…TFTL), and 234–254 (TSGS…LDGL). Asparagine 256 carries N-linked (GlcNAc...) asparagine glycosylation. A run of 3 helical transmembrane segments spans residues 293–313 (LLIM…PVPI), 337–357 (SVLG…YTLS), and 380–400 (VFWF…LVFG).

This sequence belongs to the nucleotide-sugar transporter family. SLC35B subfamily.

The protein localises to the endoplasmic reticulum membrane. Functionally, may be involved in specific transport of UDP-Gal from the cytosol to the Golgi lumen. Involved in the maintenance of optimal conditions for the folding of secretory pathway proteins in the endoplasmic reticulum. This chain is UDP-galactose transporter homolog 1 (hut1), found in Emericella nidulans (strain FGSC A4 / ATCC 38163 / CBS 112.46 / NRRL 194 / M139) (Aspergillus nidulans).